Consider the following 83-residue polypeptide: ATP synthase subunit 9, mitochondrial (83 aa).

2 consecutive transmembrane segments (helical) span residues 8 to 28 and 45 to 72; these read IGAGAATIASAGAAIGIGNVL and SFGYAILGFALTEAIASFAPMMAFLISS.

The protein belongs to the ATPase C chain family. F-type ATPases have 2 components, CF(1) - the catalytic core - and CF(0) - the membrane proton channel. CF(1) has five subunits: alpha(3), beta(3), gamma(1), delta(1), epsilon(1). CF(0) has three main subunits: a, b and c.

It is found in the mitochondrion membrane. This protein is one of the chains of the nonenzymatic membrane component (F0) of mitochondrial ATPase. The chain is ATP synthase subunit 9, mitochondrial (ATP9) from Helianthus annuus (Common sunflower).